Reading from the N-terminus, the 171-residue chain is 3-hydroxydecanoyl-[acyl-carrier-protein] dehydratase (171 aa).

H70 is an active-site residue.

It belongs to the thioester dehydratase family. FabA subfamily. As to quaternary structure, homodimer.

The protein resides in the cytoplasm. It catalyses the reaction a (3R)-hydroxyacyl-[ACP] = a (2E)-enoyl-[ACP] + H2O. It carries out the reaction (3R)-hydroxydecanoyl-[ACP] = (2E)-decenoyl-[ACP] + H2O. The catalysed reaction is (2E)-decenoyl-[ACP] = (3Z)-decenoyl-[ACP]. The protein operates within lipid metabolism; fatty acid biosynthesis. Its function is as follows. Necessary for the introduction of cis unsaturation into fatty acids. Catalyzes the dehydration of (3R)-3-hydroxydecanoyl-ACP to E-(2)-decenoyl-ACP and then its isomerization to Z-(3)-decenoyl-ACP. Can catalyze the dehydratase reaction for beta-hydroxyacyl-ACPs with saturated chain lengths up to 16:0, being most active on intermediate chain length. This is 3-hydroxydecanoyl-[acyl-carrier-protein] dehydratase from Shewanella putrefaciens (strain CN-32 / ATCC BAA-453).